The following is a 277-amino-acid chain: Caspase-3 (277 aa).

Methionine 1 is subject to N-acetylmethionine. Propeptides lie at residues 1–9 (MENSENSVD) and 10–28 (AKSI…KSMD). At lysine 11 the chain carries N6-acetyllysine. The residue at position 26 (serine 26) is a Phosphoserine. Active-site residues include histidine 121 and cysteine 163. Cysteine 163 carries the S-nitrosocysteine; in inhibited form modification.

This sequence belongs to the peptidase C14A family. In terms of assembly, heterotetramer that consists of two anti-parallel arranged heterodimers, each one formed by a 17 kDa (p17) and a 12 kDa (p12) subunit. Interacts with BIRC6/bruce. Post-translationally, cleavage by granzyme B, caspase-6, caspase-8 and caspase-10 generates the two active subunits. Additional processing of the propeptides is likely due to the autocatalytic activity of the activated protease. Active heterodimers between the small subunit of caspase-7 protease and the large subunit of caspase-3 also occur and vice versa. In terms of processing, S-nitrosylated on its catalytic site cysteine in unstimulated cell lines and denitrosylated upon activation of the Fas apoptotic pathway, associated with an increase in intracellular caspase activity. Fas therefore activates caspase-3 not only by inducing the cleavage of the caspase zymogen to its active subunits, but also by stimulating the denitrosylation of its active site thiol. Ubiquitinated by BIRC6; this activity is inhibited by DIABLO/SMAC.

It localises to the cytoplasm. It catalyses the reaction Strict requirement for an Asp residue at positions P1 and P4. It has a preferred cleavage sequence of Asp-Xaa-Xaa-Asp-|- with a hydrophobic amino-acid residue at P2 and a hydrophilic amino-acid residue at P3, although Val or Ala are also accepted at this position.. With respect to regulation, inhibited by BIRC6; following inhibition of BIRC6-caspase binding by DIABLO/SMAC, BIRC6 is subjected to caspase cleavage, leading to an increase in active caspases. Its function is as follows. Involved in the activation cascade of caspases responsible for apoptosis execution. At the onset of apoptosis, it proteolytically cleaves poly(ADP-ribose) polymerase PARP1 at a '216-Asp-|-Gly-217' bond. Cleaves and activates sterol regulatory element binding proteins (SREBPs) between the basic helix-loop-helix leucine zipper domain and the membrane attachment domain. Cleaves and activates caspase-6, -7 and -9 (CASP6, CASP7 and CASP9, respectively). Cleaves and inactivates interleukin-18 (IL18). Triggers cell adhesion in sympathetic neurons through RET cleavage. Cleaves IL-1 beta between an Asp and an Ala, releasing the mature cytokine which is involved in a variety of inflammatory processes. Cleaves and inhibits serine/threonine-protein kinase AKT1 in response to oxidative stress. Acts as an inhibitor of type I interferon production during virus-induced apoptosis by mediating cleavage of antiviral proteins CGAS, IRF3 and MAVS, thereby preventing cytokine overproduction. Also involved in pyroptosis by mediating cleavage and activation of gasdermin-E (GSDME). Cleaves XRCC4 and phospholipid scramblase proteins XKR4, XKR8 and XKR9, leading to promote phosphatidylserine exposure on apoptotic cell surface. Cleaves BIRC6 following inhibition of BIRC6-caspase binding by DIABLO/SMAC. The chain is Caspase-3 (CASP3) from Felis catus (Cat).